Reading from the N-terminus, the 173-residue chain is ATP synthase subunit d, mitochondrial (173 aa).

The transit peptide at 1 to 23 directs the protein to the mitochondrion; the sequence is MAARSAALKIDWVKVTSSLGLRG.

The protein belongs to the ATPase d subunit family. In terms of assembly, F-type ATPases have 2 components, CF(1) - the catalytic core - and CF(0) - the membrane proton channel. In yeast, the dimeric form of ATP synthase consists of 17 polypeptides: alpha, beta, gamma, delta, epsilon, 4 (B), 5 (OSCP), 6 (A), 8, 9 (C), d, E (Tim11), f, g, h, i/j and k.

It is found in the mitochondrion inner membrane. Mitochondrial membrane ATP synthase (F(1)F(0) ATP synthase or Complex V) produces ATP from ADP in the presence of a proton gradient across the membrane which is generated by electron transport complexes of the respiratory chain. F-type ATPases consist of two structural domains, F(1) - containing the extramembraneous catalytic core, and F(0) - containing the membrane proton channel, linked together by a central stalk and a peripheral stalk. During catalysis, ATP synthesis in the catalytic domain of F(1) is coupled via a rotary mechanism of the central stalk subunits to proton translocation. Part of the complex F(0) domain and the peripheric stalk, which acts as a stator to hold the catalytic alpha(3)beta(3) subcomplex and subunit a/ATP6 static relative to the rotary elements. This is ATP synthase subunit d, mitochondrial (atp7) from Aspergillus terreus (strain NIH 2624 / FGSC A1156).